The following is a 623-amino-acid chain: Immunity-related GTPase family Q protein (623 aa).

Residues cysteine 152 and cysteine 158 are joined by a disulfide bond. A coiled-coil region spans residues 155 to 180 (SDGCEELERLRAALQSQAEALRRLLP). The LIR 1 motif lies at 186-189 (FEVL). At threonine 203 the chain carries Phosphothreonine. The 227-residue stretch at 223–449 (ARLDLAVAGK…PGLCEWLRRA (227 aa)) folds into the IRG-type G domain. Positions 334–393 (EGEDPECLGEGKMENPKGESLKNAGGGGLENALSKGREKCSAGSQKAGSGEGPGKAGSEG) are disordered. Basic and acidic residues predominate over residues 342-353 (GEGKMENPKGES). The short motif at 421 to 424 (WEVL) is the LIR 2 element.

It belongs to the TRAFAC class dynamin-like GTPase superfamily. IRG family. Interacts (via LIR motif 1) with GABARAPL2. Interacts (via LIR motif 2) with MAP1LC3B/LC3B.

It is found in the lysosome. The protein localises to the cytoplasmic vesicle. The protein resides in the autophagosome. Autophagy receptor that specifically promotes clearance of misfolded MHC class I molecules by targeting them to the lysosome for degradation. Acts as a molecular adapter that specifically recognizes and binds (1) misfolded MHC class I molecules following their ubiquitination, as well as (2) autophagy-related proteins, promoting the recruitment of misfolded MHC class I molecules to autophagy machinery for degradation. Degradation of misfolded MHC class I molecules is essential to prevent accumulation of defective MHC class I complexes at the surface of CD8(+) T-cells and prevent a stronger T-cell-mediated response. In contrast to other members of the family, does not show GTPase activity. In Homo sapiens (Human), this protein is Immunity-related GTPase family Q protein.